A 203-amino-acid polypeptide reads, in one-letter code: Shikimate kinase (203 aa).

Position 38–43 (38–43 (GAGKST)) interacts with ATP. S42 lines the Mg(2+) pocket. Residues D60, R84, and G106 each coordinate substrate. R144 serves as a coordination point for ATP. Position 163 (R163) interacts with substrate.

This sequence belongs to the shikimate kinase family. As to quaternary structure, monomer. Requires Mg(2+) as cofactor.

The protein resides in the cytoplasm. It carries out the reaction shikimate + ATP = 3-phosphoshikimate + ADP + H(+). Its pathway is metabolic intermediate biosynthesis; chorismate biosynthesis; chorismate from D-erythrose 4-phosphate and phosphoenolpyruvate: step 5/7. Its function is as follows. Catalyzes the specific phosphorylation of the 3-hydroxyl group of shikimic acid using ATP as a cosubstrate. This chain is Shikimate kinase, found in Rhodopseudomonas palustris (strain ATCC BAA-98 / CGA009).